The primary structure comprises 1228 residues: Myosin-1 (1228 aa).

A disordered region spans residues 1 to 27 (MAVTKRAGRRAQGGTQPAKGAQGVKKA). Residues 37-716 (VGVSDLTLLS…TLFALEHMRD (680 aa)) form the Myosin motor domain. 130–137 (GESGAGKT) contributes to the ATP binding site. Serine 358 is modified (phosphoserine). The tract at residues 405–487 (TIGILDIYGF…PGIFAALNDA (83 aa)) is actin-binding. 2 consecutive IQ domains span residues 720 to 740 (HNMA…KTEC) and 741 to 768 (AIKI…SGHK). Residues 776–962 (RRTYSLIGYR…SGSVQVPPGA (187 aa)) form the TH1 domain. 3 disordered regions span residues 953–1040 (SGSV…AESA), 1053–1109 (QSLV…PAAP), and 1169–1228 (QGGA…DDDW). A compositionally biased stretch (polar residues) spans 1053–1063 (QSLVNPRSGQG). A compositionally biased stretch (low complexity) spans 1064–1092 (QQQQQHHQAYQQPTAAQPAATSYSPAPAK). Positions 1093 to 1106 (AAPPPPPPAPPAAP) are enriched in pro residues. The SH3 domain maps to 1109–1170 (PAEPTYKALY…PAAYLEEVQG (62 aa)). Positions 1180-1194 (PTAGGASAGASLAEA) are enriched in low complexity.

It belongs to the TRAFAC class myosin-kinesin ATPase superfamily. Myosin family. In terms of processing, phosphorylation of the TEDS site (Ser-358) is required for the polarization of the actin cytoskeleton. Phosphorylation probably activates the myosin-I ATPase activity.

The protein localises to the cytoplasm. Its subcellular location is the cytoskeleton. It localises to the actin patch. Functionally, type-I myosin implicated in the organization of the actin cytoskeleton. Required for proper actin cytoskeleton polarization. At the cell cortex, assembles in patch-like structures together with proteins from the actin-polymerizing machinery and promotes actin assembly. Functions as actin nucleation-promoting factor (NPF) for the Arp2/3 complex. This chain is Myosin-1 (MYO1), found in Yarrowia lipolytica (strain CLIB 122 / E 150) (Yeast).